Reading from the N-terminus, the 55-residue chain is ATP synthase F(0) complex subunit 8 (55 aa).

Residues 7 to 24 (NPWFYIMLMSWLTFSLII) traverse the membrane as a helical segment. A disordered region spans residues 35 to 55 (NPPSNKTSTTTRTLPWTWPWT). The span at 41–55 (TSTTTRTLPWTWPWT) shows a compositional bias: low complexity.

It belongs to the ATPase protein 8 family. In terms of assembly, component of the ATP synthase complex composed at least of ATP5F1A/subunit alpha, ATP5F1B/subunit beta, ATP5MC1/subunit c (homooctomer), MT-ATP6/subunit a, MT-ATP8/subunit 8, ATP5ME/subunit e, ATP5MF/subunit f, ATP5MG/subunit g, ATP5MK/subunit k, ATP5MJ/subunit j, ATP5F1C/subunit gamma, ATP5F1D/subunit delta, ATP5F1E/subunit epsilon, ATP5PF/subunit F6, ATP5PB/subunit b, ATP5PD/subunit d, ATP5PO/subunit OSCP. ATP synthase complex consists of a soluble F(1) head domain (subunits alpha(3) and beta(3)) - the catalytic core - and a membrane F(0) domain - the membrane proton channel (subunits c, a, 8, e, f, g, k and j). These two domains are linked by a central stalk (subunits gamma, delta, and epsilon) rotating inside the F1 region and a stationary peripheral stalk (subunits F6, b, d, and OSCP).

Its subcellular location is the mitochondrion membrane. Its function is as follows. Subunit 8, of the mitochondrial membrane ATP synthase complex (F(1)F(0) ATP synthase or Complex V) that produces ATP from ADP in the presence of a proton gradient across the membrane which is generated by electron transport complexes of the respiratory chain. ATP synthase complex consist of a soluble F(1) head domain - the catalytic core - and a membrane F(1) domain - the membrane proton channel. These two domains are linked by a central stalk rotating inside the F(1) region and a stationary peripheral stalk. During catalysis, ATP synthesis in the catalytic domain of F(1) is coupled via a rotary mechanism of the central stalk subunits to proton translocation. In vivo, can only synthesize ATP although its ATP hydrolase activity can be activated artificially in vitro. Part of the complex F(0) domain. The chain is ATP synthase F(0) complex subunit 8 from Corythaixoides concolor (Grey go-away-bird).